We begin with the raw amino-acid sequence, 294 residues long: Tryptophan 2,3-dioxygenase (294 aa).

Positions 1 to 20 are disordered; sequence MSEFKGCPFSGAASEAGTKA. Substrate contacts are provided by residues 63 to 67, Y125, and R129; that span reads FIVQH. H252 contributes to the heme binding site. Position 266 (T266) interacts with substrate.

It belongs to the tryptophan 2,3-dioxygenase family. In terms of assembly, homotetramer. Heme serves as cofactor.

It carries out the reaction L-tryptophan + O2 = N-formyl-L-kynurenine. It functions in the pathway amino-acid degradation; L-tryptophan degradation via kynurenine pathway; L-kynurenine from L-tryptophan: step 1/2. Its function is as follows. Heme-dependent dioxygenase that catalyzes the oxidative cleavage of the L-tryptophan (L-Trp) pyrrole ring and converts L-tryptophan to N-formyl-L-kynurenine. Catalyzes the oxidative cleavage of the indole moiety. The chain is Tryptophan 2,3-dioxygenase from Cupriavidus necator (strain ATCC 17699 / DSM 428 / KCTC 22496 / NCIMB 10442 / H16 / Stanier 337) (Ralstonia eutropha).